A 739-amino-acid polypeptide reads, in one-letter code: Malate synthase G (739 aa).

Residues 1-18 (MTEQELLSAQTADNAGTD) are compositionally biased toward polar residues. Residues 1 to 23 (MTEQELLSAQTADNAGTDSTERV) form a disordered region. Acetyl-CoA contacts are provided by residues Val-135, 142 to 143 (RF), Ser-292, and Arg-329. The active-site Proton acceptor is Arg-356. Glyoxylate-binding positions include Arg-356, Glu-447, and 472 to 475 (GFLD). Residues Glu-447 and Asp-475 each coordinate Mg(2+). Pro-556 provides a ligand contact to acetyl-CoA. Residue Cys-633 is modified to Cysteine sulfenic acid (-SOH). Residue Asp-647 is the Proton donor of the active site.

The protein belongs to the malate synthase family. GlcB subfamily. As to quaternary structure, monomer. Requires Mg(2+) as cofactor.

Its subcellular location is the cytoplasm. The enzyme catalyses glyoxylate + acetyl-CoA + H2O = (S)-malate + CoA + H(+). It functions in the pathway carbohydrate metabolism; glyoxylate cycle; (S)-malate from isocitrate: step 2/2. Its activity is regulated as follows. Inhibited by oxalate, glycolate and ATP. Functionally, involved in the glycolate utilization. Catalyzes the condensation and subsequent hydrolysis of acetyl-coenzyme A (acetyl-CoA) and glyoxylate to form malate and CoA. The sequence is that of Malate synthase G from Corynebacterium glutamicum (strain ATCC 13032 / DSM 20300 / JCM 1318 / BCRC 11384 / CCUG 27702 / LMG 3730 / NBRC 12168 / NCIMB 10025 / NRRL B-2784 / 534).